A 618-amino-acid polypeptide reads, in one-letter code: Syncytin-B (618 aa).

An N-terminal signal peptide occupies residues 1–17 (MTGFWVLCFVLFPSSLS). Topologically, residues 18–545 (YPESWMPLVN…SWGQWPDLGR (528 aa)) are extracellular. N-linked (GlcNAc...) asparagine glycosylation is present at N27. A CXXC motif is present at residues 44-47 (CWVC). Cystine bridges form between C44-C47, C44-C507, and C499-C506. N184, N274, and N357 each carry an N-linked (GlcNAc...) asparagine glycan. The interval 422–442 (LFPFLAGLGISSALGTGIAGL) is fusion peptide. The immunosuppression stretch occupies residues 482 to 498 (LQNRRALDLITAEKGGT). The CX6CC motif lies at 499–507 (CLFLQEECC). Residues 546-566 (WLPWLTPFLGPLLFLFFLLTF) form a helical membrane-spanning segment. The Cytoplasmic portion of the chain corresponds to 567-618 (GSCLLNCLTRFVSQRLGSFVQDTAKRHVDSILQNFQYKKLPQDSPDEDTIPT).

This sequence belongs to the gamma type-C retroviral envelope protein family. As to quaternary structure, the mature protein consists of a trimer of SU-TM heterodimers. The SU-TM heterodimers are attached by a labile interchain disulfide bond. Post-translationally, synthesized as an inactive precursor that is heavily N-glycosylated and processed likely by furin in the Golgi to yield the mature SU and TM proteins. The cleavage site between SU and TM requires the minimal sequence [KR]-X-[KR]-R. The CXXC motif is highly conserved across a broad range of retroviral envelope proteins. It is thought to participate in the formation of a labile disulfide bond possibly with the CX6CC motif present in the transmembrane protein. Isomerization of the intersubunit disulfide bond to an SU intrachain disulfide bond is thought to occur upon receptor recognition in order to allow membrane fusion. In terms of tissue distribution, highly expressed in placenta where it localizes to syncytiotrophoblasts of the labyrinthine zona. Specifically localizes to syncytiotrophoblast layer II (SynT-II). Also detected at very low levels in ovary.

It is found in the cell membrane. This endogenous retroviral envelope protein has retained its original fusogenic properties. Together with Syna, participates in trophoblast fusion and the formation of a syncytium during placenta morphogenesis. Synb is specifically involved in formation of syncytiotrophoblast layer II (SynT-II). Promotes myoblast fusion, and may play a role in regeneration of damaged muscle tissue in males. May have immunosuppressive activity. The sequence is that of Syncytin-B from Mus musculus (Mouse).